Consider the following 136-residue polypeptide: Protein PsiE (136 aa).

The next 4 membrane-spanning stretches (helical) occupy residues 15–35, 55–75, 82–102, and 108–128; these read ILQN…VLFL, YELV…ALIV, FHFP…RLII, and PMDV…LWLC.

Belongs to the PsiE family.

It localises to the cell inner membrane. This is Protein PsiE from Salmonella arizonae (strain ATCC BAA-731 / CDC346-86 / RSK2980).